A 1098-amino-acid polypeptide reads, in one-letter code: Protein diaphanous homolog 2 (1098 aa).

Residue methionine 1 is modified to N-acetylmethionine. A disordered region spans residues 1 to 62 (MEELGAAASG…SFRKSATKRE (62 aa)). Over residues 36 to 52 (ANEEETRNKPKLRDRIT) the composition is skewed to basic and acidic residues. One can recognise a GBD/FH3 domain in the interval 90–463 (SLILSEKEVL…QIVLHCSGMD (374 aa)). Coiled coils occupy residues 375 to 416 (QLRV…NMLK) and 490 to 539 (EENE…GQGV). Disordered regions lie at residues 537 to 565 (QGVP…PPPP), 578 to 611 (PPPP…GVFP), 679 to 699 (MKGQ…PKKK), 1007 to 1047 (HKRK…NKEG), and 1063 to 1098 (GAAF…MSSK). Composition is skewed to pro residues over residues 543-565 (IPGP…PPPP) and 578-608 (PPPP…PPGG). The FH1 domain maps to 544 to 620 (PGPPPPPPLP…PLLSGPIELP (77 aa)). Residues 625 to 1025 (QKKLYKPDIP…SRRAKLAKEK (401 aa)) enclose the FH2 domain. Residues 999–1050 (FLEALKENHKRKEMEEKSRRAKLAKEKAEQEKLERQKKKKQLIDINKEGDET) are a coiled coil. Basic and acidic residues-rich tracts occupy residues 1007–1032 (HKRK…EKLE) and 1075–1087 (RNPD…LERS). Positions 1048–1078 (DETGVMDNLLEALQSGAAFRDRRKRIPRNPD) constitute a DAD domain.

The protein belongs to the formin homology family. Diaphanous subfamily. As to quaternary structure, interacts with MAPRE1 and APC.

Its function is as follows. May be involved in oogenesis. The protein is Protein diaphanous homolog 2 (Diaph2) of Mus musculus (Mouse).